The chain runs to 464 residues: Alpha-2A adrenergic receptor (464 aa).

Residues 1 to 47 (MFRQEQRWPRQLWPMGSLQPDSGNASWNGTEGPGGGTRATPYSLQVT) are Extracellular-facing. Residues 13 to 34 (WPMGSLQPDSGNASWNGTEGPG) are disordered. Residues 19–29 (QPDSGNASWNG) are compositionally biased toward polar residues. N-linked (GlcNAc...) asparagine glycans are attached at residues asparagine 24 and asparagine 28. Residues 48–73 (VTLVCLVGLLILLTVFGNVLVIIAVF) traverse the membrane as a helical segment. Residues 74–84 (TSRALKAPQNL) are Cytoplasmic-facing. A helical membrane pass occupies residues 85 to 110 (FLVSLASADILVATLVIPFSLANEVM). Residues 111-120 (GYWYFGKAWC) are Extracellular-facing. A disulfide bridge links cysteine 120 with cysteine 201. A helical membrane pass occupies residues 121 to 143 (EIYLALDVLFCTSSIVHLCAISL). The Cytoplasmic portion of the chain corresponds to 144-163 (DRYWSITQAIEYNLKRTPRR). The helical transmembrane segment at 164 to 187 (IKAIIVTVWVISAVISFPPLISFE) threads the bilayer. Residues 188 to 206 (KAGGGGQQPAEPRCEINDQ) lie on the Extracellular side of the membrane. The chain crosses the membrane as a helical span at residues 207–231 (KWYVISSSIGSFFAPCLIMILVYVR). The Cytoplasmic portion of the chain corresponds to 232 to 388 (IYQIAKRRTR…RQNREKRFTF (157 aa)). The tract at residues 240–378 (TRVPPSRRGP…GGAKASRWRG (139 aa)) is disordered. Low complexity predominate over residues 251–268 (AHAAAPPGGAERRPNGLG). The span at 312 to 329 (SSEHAERPPGARRPERGL) shows a compositional bias: basic and acidic residues. Serine 345 is modified (phosphoserine). The span at 354-363 (AGSGTSGSGP) shows a compositional bias: gly residues. Omega-N-methylarginine is present on arginine 367. A helical membrane pass occupies residues 389–413 (VLAVVIGVFVVCWFPFFFTYTLTAV). Topologically, residues 414–423 (GCSVPRTLFK) are extracellular. The helical transmembrane segment at 424–444 (FFFWFGYCNSSLNPVIYTIFN) threads the bilayer. At 445-464 (HDFRRAFKKILCRGDRKRIV) the chain is on the cytoplasmic side. A lipid anchor (S-palmitoyl cysteine) is attached at cysteine 456.

The protein belongs to the G-protein coupled receptor 1 family. Adrenergic receptor subfamily. ADRA2A sub-subfamily. As to quaternary structure, component of the ADA2A-containing complex (ATAC), composed of KAT14, KAT2A, TADA2L, TADA3L, ZZ3, MBIP, WDR5, YEATS2, CCDC101 and DR1.

The protein resides in the cell membrane. Its function is as follows. Alpha-2 adrenergic receptors mediate the catecholamine-induced inhibition of adenylate cyclase through the action of G proteins. Component of the ATAC complex, a complex with histone acetyltransferase activity on histones H3 and H4. In Cavia porcellus (Guinea pig), this protein is Alpha-2A adrenergic receptor.